The sequence spans 379 residues: MTAVTPTLPAPIGLLAELTHRCPLRCPYCSNPLELDKRSAELDTATWQRVLGEAAALGVLHVHLSGGEPTARQDIVEITGACADLGLYSNLITSGVGGALAKLDALSEAGLDHVQLSIQAAEAGNAERIGGLRNAQPQKFAFAERVVALGLPLTLNAVIHRGNIDEVPALIDLAVRLGAKRLEVAHTQYYGWAYVNRAALMPAKPDVDRSIRVVEEARERLKGRLVIDLVVPDYYAKYPKACAGGWGRRLMNVTPSGKVLPCHAAETIPGLAFWNVQERALGDIWANSPAFQAYRGTSWMKEPCRSCDRREKDWGGCRCQALALAGDAAATDPACSLSPLHAKVQALAVAESALETAPDYQYRTIGGAPVVPQPEGVSA.

Positions 8-220 (LPAPIGLLAE…IRVVEEARER (213 aa)) constitute a Radical SAM core domain. Positions 22, 26, and 29 each coordinate [4Fe-4S] cluster.

This sequence belongs to the radical SAM superfamily. PqqE family. As to quaternary structure, interacts with PqqD. The interaction is necessary for activity of PqqE. [4Fe-4S] cluster is required as a cofactor.

The catalysed reaction is [PQQ precursor protein] + S-adenosyl-L-methionine = E-Y cross-linked-[PQQ precursor protein] + 5'-deoxyadenosine + L-methionine + H(+). It functions in the pathway cofactor biosynthesis; pyrroloquinoline quinone biosynthesis. In terms of biological role, catalyzes the cross-linking of a glutamate residue and a tyrosine residue in the PqqA protein as part of the biosynthesis of pyrroloquinoline quinone (PQQ). This Methylobacterium sp. (strain 4-46) protein is PqqA peptide cyclase.